Reading from the N-terminus, the 532-residue chain is NMDA receptor synaptonuclear signaling and neuronal migration factor (532 aa).

Residue G2 is the site of N-myristoyl glycine attachment. Residues 2–235 form a necessary and sufficient to elicit dendritic processes and synaptic contacts region; the sequence is GAAASRRRAL…FSFQTATTTM (234 aa). Disordered regions lie at residues 34-67 and 127-174; these read SQSH…APHN and RRQR…GCAK. Basic and acidic residues predominate over residues 38–48; that stretch reads PENRNGADHLL. A compositionally biased stretch (basic residues) spans 127–139; sequence RRQRERHPHHHSQ. The segment covering 155–164 has biased composition (polar residues); sequence PCQSWAGSRQ. S206 is subject to Phosphoserine. A Nuclear localization signal motif is present at residues 247 to 252; it reads RKRRKR. The tract at residues 275 to 315 is disordered; the sequence is RVKAQTFAERRERSFSRSWSDPTPMKADTSHDSRDSSDLQS. Phosphoserine occurs at positions 292 and 294. Positions 302-311 are enriched in basic and acidic residues; it reads DTSHDSRDSS.

It belongs to the NSMF family. As to quaternary structure, interacts with KPNA1; the interaction occurs in a calcium-independent manner after synaptic NMDA receptor stimulation and is required for nuclear import of NSMF but is competed by CABP1. Interacts (via the central NLS-containing motif region) with CABP1 (via EF-hands 1 and 2); the interaction occurs in a calcium-dependent manner after synaptic NMDA receptor stimulation and prevents the nuclear import of NSMF. Cannot be competed by calmodulin. In terms of processing, proteolytically processed after NMDA receptor activation. Cleaved in a calcium-dependent and calpain-sensitive manner. Calpain cleavage is essential for the translocation process from dendrites to the nucleus. As to expression, expressed in the radiatum and pyramidale strata of the hippocampus (at protein level). Strongly expressed in the brain. Expressed in the sensory and motor cortex, hippocampus, olfactory bulb, thalamus and amygdala. In the olfactory bulb expressed in the granular cell layer, mitral cell layer and the glomerular layer. In the hippocampus highly expressed in the regions associated with neuronal cell types as CA1, CA2, CA3 and granule cells of the dentate gyrus. All isoforms have been detected in the molecular layers of the hippocampus.

Its subcellular location is the nucleus. It is found in the nucleus envelope. The protein resides in the nucleus membrane. The protein localises to the nucleus matrix. It localises to the cytoplasm. Its subcellular location is the cell cortex. It is found in the cytoskeleton. The protein resides in the cell membrane. The protein localises to the cell projection. It localises to the dendrite. Its subcellular location is the synapse. It is found in the synaptosome. The protein resides in the postsynaptic density. The protein localises to the membrane. Functionally, couples NMDA-sensitive glutamate receptor signaling to the nucleus and triggers long-lasting changes in the cytoarchitecture of dendrites and spine synapse processes. Part of the cAMP response element-binding protein (CREB) shut-off signaling pathway. Stimulates outgrowth of olfactory axons and migration of gonadotropin-releasing hormone (GnRH) and luteinizing-hormone-releasing hormone (LHRH) neuronal cells. The chain is NMDA receptor synaptonuclear signaling and neuronal migration factor (Nsmf) from Rattus norvegicus (Rat).